The primary structure comprises 1433 residues: MAFRKENKIKNNFSKIRITLASPEEILENSFGEVLKPETINYRTYKPERDGLFCERIFGPVKDFECHCGKYKRIRYRGIVCDRCGVEVTEKKVRRERMGHIHLVVPVAHIWYFRSLPNKIGYLLGLPTKKLDAIIYYERYVVIQPGVAEGLSQLDLLSEEEYLDKLDEIERTHKGNQNLEDTNPDKFIAKIGAEAIYDLLCRVDLDSISYELRDRANTDGSQQRKTEALKRLQVVESFRASKGVNRPEWMVMKVIPVIPPDLRPLVPLDGGRFATSDLNDLYRRVIIRNNRLKRLIEIKAPEVILRNEKRMLQEAVDSLFDNSRKSSAVKSDNNRPLKSLSDSLKGKQGRFRQNLLGKRVDYSARSVIVVGPELKMHECGLPKDMAAELYKPFIIRKLIERGIVKTVKSAKKIVDRKEPVIWDILEYVMKGHPVLLNRAPTLHRLGIQAFQPKLIEGKAIQLHPLSCTAFNADFDGDQMAVHLPLSNEAILEAQLLMLASHNILNPANGAPITVPSQDMVLGLYYITKLRPNIKGHGLIFYGPEEATIAYNEGKVDIHAPIKVYVEDYENGELVRRMVETSVGRLMVNEYVPKKVGYVNEVLGKKALRDIIGSVIKICGVATTAKFLDDIKNLGYYMAFKGGLSFNLADVLIPDEKDQLIQEGYTAVEQIMQDYSMGFITFNERYNQIIDTWTHINGRLSNVLIKQLSSDNDGFNSVFMMMDSGARGSKEQIRQLSGMRGLMAKPQKSGAEGGQIIENPILSNFKEGLSVLEYFISTHGARKGLADTALKTADAGYLTRRLVDVSHDVIITEEDCGTLRGLLTTELKQNEDVVASLYERILGRVSVHDIIHPTTGDIIVRAGEEIREQAAQIIEDSPIEAVEIRSVLTCESKKGVCAKCYGRNLATNRMVQRGEVVGVIAAQSIGEPGTQLTLRTFHVGGIASNVATENSLLSKYDGILEFEELRAVDATDESHQVVVSRMTELRIADPNTGIILANHNIPYGAKLFFRQGDAVKKGDKIIEWDPFNAVIVSEVAGTLSFEGVVENVTFKMESDETTGLKEKIIIESKDKTMAPYARIIDENGEMLKNYSLPMGAHVVKDDGDTVKVGEILVKIPRSVGKAGDITGGLPRVTELFEARNPSNPAIVSEIDGEIGFGKLKRGNREITVTSKLGEEKKYLIPLSKQLLVQENDFVRAGTPLSDGAITPADILAIKGPTAVQEYIVNEVQDVYRLQGVKINDKHFEVIVRQMMRKVEIVDPGDTLFLEQQVVDKFEVMEENDRIWGKKVVIDAGDSQVLKAGQIVTARKLRDENSMLKRKDLKIVKVRDAKSATASQILQGITRAALQTKSFMSAASFQETTKVLNEAAICGKTDYLEGLKENVICGHLIPAGTGLRDYEKLVVMHRDDYEKATAERKSFLSVPTAEPAMEEAPSE.

Zn(2+) contacts are provided by Cys66, Cys68, Cys81, and Cys84. The Mg(2+) site is built by Asp473, Asp475, and Asp477. 4 residues coordinate Zn(2+): Cys815, Cys889, Cys896, and Cys899.

This sequence belongs to the RNA polymerase beta' chain family. The RNAP catalytic core consists of 2 alpha, 1 beta, 1 beta' and 1 omega subunit. When a sigma factor is associated with the core the holoenzyme is formed, which can initiate transcription. Requires Mg(2+) as cofactor. Zn(2+) is required as a cofactor.

The catalysed reaction is RNA(n) + a ribonucleoside 5'-triphosphate = RNA(n+1) + diphosphate. DNA-dependent RNA polymerase catalyzes the transcription of DNA into RNA using the four ribonucleoside triphosphates as substrates. This Porphyromonas gingivalis (strain ATCC 33277 / DSM 20709 / CIP 103683 / JCM 12257 / NCTC 11834 / 2561) protein is DNA-directed RNA polymerase subunit beta'.